Here is a 234-residue protein sequence, read N- to C-terminus: Leucyl/phenylalanyl-tRNA--protein transferase (234 aa).

It belongs to the L/F-transferase family.

The protein resides in the cytoplasm. The enzyme catalyses N-terminal L-lysyl-[protein] + L-leucyl-tRNA(Leu) = N-terminal L-leucyl-L-lysyl-[protein] + tRNA(Leu) + H(+). It carries out the reaction N-terminal L-arginyl-[protein] + L-leucyl-tRNA(Leu) = N-terminal L-leucyl-L-arginyl-[protein] + tRNA(Leu) + H(+). The catalysed reaction is L-phenylalanyl-tRNA(Phe) + an N-terminal L-alpha-aminoacyl-[protein] = an N-terminal L-phenylalanyl-L-alpha-aminoacyl-[protein] + tRNA(Phe). Functions in the N-end rule pathway of protein degradation where it conjugates Leu, Phe and, less efficiently, Met from aminoacyl-tRNAs to the N-termini of proteins containing an N-terminal arginine or lysine. In Pectobacterium carotovorum subsp. carotovorum (strain PC1), this protein is Leucyl/phenylalanyl-tRNA--protein transferase.